The primary structure comprises 145 residues: Acidic phospholipase A2 (145 aa).

The N-terminal stretch at 1–19 is a signal peptide; that stretch reads MNPAHLLILSAVCVSLLGA. Positions 20–27 are excised as a propeptide; the sequence is ANVPPQHL. 7 disulfide bridges follow: Cys38-Cys97, Cys52-Cys144, Cys54-Cys70, Cys69-Cys125, Cys76-Cys118, Cys86-Cys111, and Cys104-Cys116. The Ca(2+) site is built by Tyr53, Gly55, and Gly57. His73 is an active-site residue. Asp74 provides a ligand contact to Ca(2+). Residue Asp119 is part of the active site.

Belongs to the phospholipase A2 family. Group I subfamily. D49 sub-subfamily. Ca(2+) serves as cofactor. As to expression, expressed by the venom gland.

It localises to the secreted. The catalysed reaction is a 1,2-diacyl-sn-glycero-3-phosphocholine + H2O = a 1-acyl-sn-glycero-3-phosphocholine + a fatty acid + H(+). Functionally, PLA2 catalyzes the calcium-dependent hydrolysis of the 2-acyl groups in 3-sn-phosphoglycerides. This is Acidic phospholipase A2 from Bungarus multicinctus (Many-banded krait).